Reading from the N-terminus, the 249-residue chain is 5'-nucleotidase SurE (249 aa).

A divalent metal cation contacts are provided by aspartate 9, aspartate 10, serine 40, and asparagine 92.

The protein belongs to the SurE nucleotidase family. A divalent metal cation is required as a cofactor.

The protein resides in the cytoplasm. It carries out the reaction a ribonucleoside 5'-phosphate + H2O = a ribonucleoside + phosphate. Nucleotidase that shows phosphatase activity on nucleoside 5'-monophosphates. This chain is 5'-nucleotidase SurE, found in Shewanella frigidimarina (strain NCIMB 400).